Reading from the N-terminus, the 168-residue chain is S-ribosylhomocysteine lyase (168 aa).

Residues His54, His58, and Cys128 each contribute to the Fe cation site.

It belongs to the LuxS family. In terms of assembly, homodimer. Requires Fe cation as cofactor.

The enzyme catalyses S-(5-deoxy-D-ribos-5-yl)-L-homocysteine = (S)-4,5-dihydroxypentane-2,3-dione + L-homocysteine. Its function is as follows. Involved in the synthesis of autoinducer 2 (AI-2) which is secreted by bacteria and is used to communicate both the cell density and the metabolic potential of the environment. The regulation of gene expression in response to changes in cell density is called quorum sensing. Catalyzes the transformation of S-ribosylhomocysteine (RHC) to homocysteine (HC) and 4,5-dihydroxy-2,3-pentadione (DPD). The polypeptide is S-ribosylhomocysteine lyase (Neisseria meningitidis serogroup A / serotype 4A (strain DSM 15465 / Z2491)).